An 862-amino-acid chain; its full sequence is Alanine--tRNA ligase (862 aa).

The Zn(2+) site is built by His552, His556, Cys653, and His657.

The protein belongs to the class-II aminoacyl-tRNA synthetase family. Zn(2+) is required as a cofactor.

It localises to the cytoplasm. It catalyses the reaction tRNA(Ala) + L-alanine + ATP = L-alanyl-tRNA(Ala) + AMP + diphosphate. Catalyzes the attachment of alanine to tRNA(Ala) in a two-step reaction: alanine is first activated by ATP to form Ala-AMP and then transferred to the acceptor end of tRNA(Ala). Also edits incorrectly charged Ser-tRNA(Ala) and Gly-tRNA(Ala) via its editing domain. The protein is Alanine--tRNA ligase of Nitrosospira multiformis (strain ATCC 25196 / NCIMB 11849 / C 71).